Here is a 254-residue protein sequence, read N- to C-terminus: 3-deoxy-manno-octulosonate cytidylyltransferase (254 aa).

The protein belongs to the KdsB family.

The protein resides in the cytoplasm. The catalysed reaction is 3-deoxy-alpha-D-manno-oct-2-ulosonate + CTP = CMP-3-deoxy-beta-D-manno-octulosonate + diphosphate. It functions in the pathway nucleotide-sugar biosynthesis; CMP-3-deoxy-D-manno-octulosonate biosynthesis; CMP-3-deoxy-D-manno-octulosonate from 3-deoxy-D-manno-octulosonate and CTP: step 1/1. It participates in bacterial outer membrane biogenesis; lipopolysaccharide biosynthesis. Its function is as follows. Activates KDO (a required 8-carbon sugar) for incorporation into bacterial lipopolysaccharide in Gram-negative bacteria. This is 3-deoxy-manno-octulosonate cytidylyltransferase from Pseudomonas syringae pv. tomato (strain ATCC BAA-871 / DC3000).